The chain runs to 426 residues: Glutamate-1-semialdehyde 2,1-aminomutase (426 aa).

An N6-(pyridoxal phosphate)lysine modification is found at Lys265.

The protein belongs to the class-III pyridoxal-phosphate-dependent aminotransferase family. HemL subfamily. Homodimer. Pyridoxal 5'-phosphate is required as a cofactor.

It is found in the cytoplasm. It carries out the reaction (S)-4-amino-5-oxopentanoate = 5-aminolevulinate. The protein operates within porphyrin-containing compound metabolism; protoporphyrin-IX biosynthesis; 5-aminolevulinate from L-glutamyl-tRNA(Glu): step 2/2. The chain is Glutamate-1-semialdehyde 2,1-aminomutase from Methylococcus capsulatus (strain ATCC 33009 / NCIMB 11132 / Bath).